The sequence spans 99 residues: NADH-quinone oxidoreductase subunit K (99 aa).

3 consecutive transmembrane segments (helical) span residues Pro-3–Leu-23, Ile-28–Phe-48, and Val-59–Ile-79.

This sequence belongs to the complex I subunit 4L family. As to quaternary structure, NDH-1 is composed of 14 different subunits. Subunits NuoA, H, J, K, L, M, N constitute the membrane sector of the complex.

The protein localises to the cell membrane. The enzyme catalyses a quinone + NADH + 5 H(+)(in) = a quinol + NAD(+) + 4 H(+)(out). In terms of biological role, NDH-1 shuttles electrons from NADH, via FMN and iron-sulfur (Fe-S) centers, to quinones in the respiratory chain. The immediate electron acceptor for the enzyme in this species is believed to be a menaquinone. Couples the redox reaction to proton translocation (for every two electrons transferred, four hydrogen ions are translocated across the cytoplasmic membrane), and thus conserves the redox energy in a proton gradient. The chain is NADH-quinone oxidoreductase subunit K from Mycobacterium sp. (strain KMS).